The following is a 242-amino-acid chain: Succinyl-CoA:3-ketoacid coenzyme A transferase subunit A (242 aa).

33–39 (GGFGLCG) provides a ligand contact to CoA.

Belongs to the 3-oxoacid CoA-transferase subunit A family. Heterodimer of a subunit A and a subunit B.

It catalyses the reaction a 3-oxo acid + succinyl-CoA = a 3-oxoacyl-CoA + succinate. It participates in bacterial outer membrane biogenesis; lipopolysaccharide biosynthesis. The protein is Succinyl-CoA:3-ketoacid coenzyme A transferase subunit A (lpsI) of Xanthomonas campestris pv. campestris (strain ATCC 33913 / DSM 3586 / NCPPB 528 / LMG 568 / P 25).